Consider the following 365-residue polypeptide: Aminomethyltransferase (365 aa).

Belongs to the GcvT family. In terms of assembly, the glycine cleavage system is composed of four proteins: P, T, L and H.

The catalysed reaction is N(6)-[(R)-S(8)-aminomethyldihydrolipoyl]-L-lysyl-[protein] + (6S)-5,6,7,8-tetrahydrofolate = N(6)-[(R)-dihydrolipoyl]-L-lysyl-[protein] + (6R)-5,10-methylene-5,6,7,8-tetrahydrofolate + NH4(+). Its function is as follows. The glycine cleavage system catalyzes the degradation of glycine. The polypeptide is Aminomethyltransferase (Yersinia pseudotuberculosis serotype O:1b (strain IP 31758)).